A 162-amino-acid chain; its full sequence is Peroxiredoxin-2C (162 aa).

Residues 4–162 enclose the Thioredoxin domain; sequence ITVGDVVPDG…SSAEDILKAL (159 aa). Cys-51 serves as the catalytic Cysteine sulfenic acid (-SOH) intermediate.

It belongs to the peroxiredoxin family. Prx5 subfamily. In terms of assembly, monomer. In terms of tissue distribution, highly expressed in buds and flowers. Slightly expressed in green tissues. Also detected in pollen.

The protein localises to the cytoplasm. The enzyme catalyses [glutaredoxin]-dithiol + a hydroperoxide = [glutaredoxin]-disulfide + an alcohol + H2O. Thiol-specific peroxidase that catalyzes the reduction of hydrogen peroxide and organic hydroperoxides to water and alcohols, respectively. Plays a role in cell protection against oxidative stress by detoxifying peroxides and as sensor of hydrogen peroxide-mediated signaling events. The protein is Peroxiredoxin-2C (PRXIIC) of Arabidopsis thaliana (Mouse-ear cress).